The primary structure comprises 121 residues: Small ribosomal subunit protein uS11 (121 aa).

This sequence belongs to the universal ribosomal protein uS11 family. As to quaternary structure, part of the 30S ribosomal subunit. Interacts with proteins S7 and S18. Binds to IF-3.

Its function is as follows. Located on the platform of the 30S subunit, it bridges several disparate RNA helices of the 16S rRNA. Forms part of the Shine-Dalgarno cleft in the 70S ribosome. This chain is Small ribosomal subunit protein uS11, found in Mycoplasma genitalium (strain ATCC 33530 / DSM 19775 / NCTC 10195 / G37) (Mycoplasmoides genitalium).